A 341-amino-acid chain; its full sequence is Phosphoribosylformylglycinamidine cyclo-ligase (341 aa).

It belongs to the AIR synthase family.

The protein localises to the cytoplasm. The catalysed reaction is 2-formamido-N(1)-(5-O-phospho-beta-D-ribosyl)acetamidine + ATP = 5-amino-1-(5-phospho-beta-D-ribosyl)imidazole + ADP + phosphate + H(+). Its pathway is purine metabolism; IMP biosynthesis via de novo pathway; 5-amino-1-(5-phospho-D-ribosyl)imidazole from N(2)-formyl-N(1)-(5-phospho-D-ribosyl)glycinamide: step 2/2. The sequence is that of Phosphoribosylformylglycinamidine cyclo-ligase from Xanthomonas euvesicatoria pv. vesicatoria (strain 85-10) (Xanthomonas campestris pv. vesicatoria).